We begin with the raw amino-acid sequence, 1093 residues long: Probable cellulose synthase A catalytic subunit 3 [UDP-forming] (1093 aa).

The Cytoplasmic segment spans residues 1–280 (MEASAGLVAG…PSSQINPYRM (280 aa)). Cys-39, Cys-42, Cys-58, Cys-61, Cys-66, Cys-69, Cys-81, and Cys-84 together coordinate Zn(2+). An RING-type; degenerate zinc finger spans residues 39–85 (CQICGDDVGLNPDGEPFVACNECAFPVCRDCYEYERREGTQNCPQCK). A compositionally biased stretch (basic and acidic residues) spans 233–246 (LHQMRNDGGGKDWD). The segment at 233-257 (LHQMRNDGGGKDWDGDGDDGDLPLM) is disordered. A helical membrane pass occupies residues 281–301 (VIIIRLVVLGFFFHYRVMHPV). Residues 302–303 (PD) are Extracellular-facing. A helical transmembrane segment spans residues 304–324 (AFALWLISVICEIWFAMSWIL). The Cytoplasmic segment spans residues 325 to 869 (DQFPKWFPIE…CLERFSYINS (545 aa)). Residues Ser-363, Lys-369, Glu-370, and Asp-399 each contribute to the UDP-alpha-D-glucose site. The active site involves Asp-399. A coiled-coil region spans residues 453 to 480 (VRERRAMKREYEEFKVRINALVAKAQKV). Lys-540 is a binding site for UDP-alpha-D-glucose. Mn(2+) contacts are provided by Lys-541 and Asp-565. Asp-793 is a catalytic residue. A helical transmembrane segment spans residues 870 to 890 (IVYPFTSIPLLAYCTLPAICL). Over 891-902 (LTGKFITPELTN) the chain is Extracellular. Residues 903-923 (VASLWFMSLFICIFATGILEM) form a helical membrane-spanning segment. Residues 924–939 (RWSGVGIDDWWRNEQF) lie on the Cytoplasmic side of the membrane. Residues 940–960 (WVIGGVSSHLFALFQGLLKVI) form a helical membrane-spanning segment. The Extracellular segment spans residues 961 to 988 (AGIDTSFTVTSKGGDDEEFSELYTFKWT). The chain crosses the membrane as a helical span at residues 989–1009 (TLLIPPTTLLLLNFIGVVAGV). At 1010 to 1020 (SNAINNGYESW) the chain is on the cytoplasmic side. Residues 1021-1041 (GPLFGKLFFAFWVIVHLYPFL) traverse the membrane as a helical segment. At 1042–1050 (KGLVGRQNR) the chain is on the extracellular side. The helical transmembrane segment at 1051 to 1071 (TPTIVIVWSILLASIFSLLWV) threads the bilayer. At 1072 to 1093 (RIDPFLAKNDGPLLEECGLDCN) the chain is on the cytoplasmic side.

The protein belongs to the glycosyltransferase 2 family. Plant cellulose synthase subfamily. Requires Mn(2+) as cofactor. It depends on Zn(2+) as a cofactor.

It localises to the cell membrane. The enzyme catalyses [(1-&gt;4)-beta-D-glucosyl](n) + UDP-alpha-D-glucose = [(1-&gt;4)-beta-D-glucosyl](n+1) + UDP + H(+). Its pathway is glycan metabolism; plant cellulose biosynthesis. Probable catalytic subunit of cellulose synthase terminal complexes ('rosettes'), required for beta-1,4-glucan microfibril crystallization, a major mechanism of the cell wall formation. This chain is Probable cellulose synthase A catalytic subunit 3 [UDP-forming] (CESA3), found in Oryza sativa subsp. japonica (Rice).